Reading from the N-terminus, the 478-residue chain is Probable cytosol aminopeptidase (478 aa).

Mn(2+)-binding residues include Lys-244 and Asp-249. Residue Lys-256 is part of the active site. Positions 267, 326, and 328 each coordinate Mn(2+). Arg-330 is an active-site residue.

It belongs to the peptidase M17 family. Mn(2+) is required as a cofactor.

The protein localises to the cytoplasm. The catalysed reaction is Release of an N-terminal amino acid, Xaa-|-Yaa-, in which Xaa is preferably Leu, but may be other amino acids including Pro although not Arg or Lys, and Yaa may be Pro. Amino acid amides and methyl esters are also readily hydrolyzed, but rates on arylamides are exceedingly low.. It catalyses the reaction Release of an N-terminal amino acid, preferentially leucine, but not glutamic or aspartic acids.. Presumably involved in the processing and regular turnover of intracellular proteins. Catalyzes the removal of unsubstituted N-terminal amino acids from various peptides. The protein is Probable cytosol aminopeptidase of Fusobacterium nucleatum subsp. nucleatum (strain ATCC 25586 / DSM 15643 / BCRC 10681 / CIP 101130 / JCM 8532 / KCTC 2640 / LMG 13131 / VPI 4355).